A 461-amino-acid chain; its full sequence is UPF0210 protein Ddes_0622 (461 aa).

Belongs to the UPF0210 family. In terms of assembly, homodimer.

The polypeptide is UPF0210 protein Ddes_0622 (Desulfovibrio desulfuricans (strain ATCC 27774 / DSM 6949 / MB)).